The chain runs to 330 residues: Putative acetyltransferase ORF330 (330 aa).

10 helical membrane passes run 29 to 49 (GFAS…LPLS), 50 to 70 (IFRP…FLLL), 90 to 110 (IYPL…YYFH), 118 to 138 (LFLH…SYVF), 163 to 183 (FLLA…IVTL), 190 to 210 (LLYF…IAYI), 225 to 245 (ISFL…NEFL), 252 to 272 (VVVY…PPKV), 273 to 293 (LSKV…WHLL), and 297 to 317 (LLGV…EFPL).

It is found in the host membrane. The protein is Putative acetyltransferase ORF330 of Acidianus convivator (ATV).